Reading from the N-terminus, the 392-residue chain is Succinate--CoA ligase [ADP-forming] subunit beta (392 aa).

The region spanning 9-236 is the ATP-grasp domain; it reads RDLFERHGLP…QAAVDPLEQA (228 aa). Residues lysine 45, 52 to 54, alanine 94, and glutamate 99 contribute to the ATP site; that span reads GRG. Positions 191 and 205 each coordinate Mg(2+). Residues asparagine 256 and 318–320 contribute to the substrate site; that span reads GIT.

It belongs to the succinate/malate CoA ligase beta subunit family. In terms of assembly, heterotetramer of two alpha and two beta subunits. Requires Mg(2+) as cofactor.

It carries out the reaction succinate + ATP + CoA = succinyl-CoA + ADP + phosphate. The catalysed reaction is GTP + succinate + CoA = succinyl-CoA + GDP + phosphate. It functions in the pathway carbohydrate metabolism; tricarboxylic acid cycle; succinate from succinyl-CoA (ligase route): step 1/1. Functionally, succinyl-CoA synthetase functions in the citric acid cycle (TCA), coupling the hydrolysis of succinyl-CoA to the synthesis of either ATP or GTP and thus represents the only step of substrate-level phosphorylation in the TCA. The beta subunit provides nucleotide specificity of the enzyme and binds the substrate succinate, while the binding sites for coenzyme A and phosphate are found in the alpha subunit. The polypeptide is Succinate--CoA ligase [ADP-forming] subunit beta (Salinispora arenicola (strain CNS-205)).